The primary structure comprises 136 residues: MLQPKRTKFRKVHKGRNRGLAAGTEVSFGTFGLKAVGRGRLTARQIEAARRAMTRAVKRQGKIWIRVFPDKPITEKPLEVRMGKGKGNVEYWVALIQPGKVLYEMDGVSEEIARNAFALAAAKLPIKTTFVTKTVM.

It belongs to the universal ribosomal protein uL16 family. As to quaternary structure, part of the 50S ribosomal subunit.

Functionally, binds 23S rRNA and is also seen to make contacts with the A and possibly P site tRNAs. This chain is Large ribosomal subunit protein uL16, found in Actinobacillus succinogenes (strain ATCC 55618 / DSM 22257 / CCUG 43843 / 130Z).